We begin with the raw amino-acid sequence, 95 residues long: Ferredoxin-like protein FixX (95 aa).

The protein belongs to the bacterial-type ferredoxin family. FixX subfamily.

Its function is as follows. Could be part of an electron transfer system required for anaerobic carnitine reduction. Could be a 3Fe-4S cluster-containing protein. This Salmonella typhimurium (strain LT2 / SGSC1412 / ATCC 700720) protein is Ferredoxin-like protein FixX (fixX).